A 353-amino-acid polypeptide reads, in one-letter code: Adenine deaminase (353 aa).

Zn(2+) is bound by residues histidine 19, histidine 21, and histidine 208. The active-site Proton donor is glutamate 211. Residue aspartate 289 participates in Zn(2+) binding. Position 290 (aspartate 290) interacts with substrate.

It belongs to the metallo-dependent hydrolases superfamily. Adenosine and AMP deaminases family. Adenine deaminase type 2 subfamily. Zn(2+) is required as a cofactor.

The protein resides in the cytoplasm. It is found in the nucleus. It carries out the reaction adenine + H2O + H(+) = hypoxanthine + NH4(+). Catalyzes the hydrolytic deamination of adenine to hypoxanthine. Plays an important role in the purine salvage pathway and in nitrogen catabolism. In Gibberella zeae (strain ATCC MYA-4620 / CBS 123657 / FGSC 9075 / NRRL 31084 / PH-1) (Wheat head blight fungus), this protein is Adenine deaminase.